The primary structure comprises 151 residues: Small ribosomal subunit protein bS6 (151 aa).

The segment at 98–151 (EESPIQKAEKENRERKNRAERRAAEAAAATETEKSESEESAEEETSTDTTGEEE) is disordered. Acidic residues predominate over residues 135 to 151 (EESAEEETSTDTTGEEE).

This sequence belongs to the bacterial ribosomal protein bS6 family.

Binds together with bS18 to 16S ribosomal RNA. In Teredinibacter turnerae (strain ATCC 39867 / T7901), this protein is Small ribosomal subunit protein bS6.